A 333-amino-acid chain; its full sequence is Arylacetonitrilase (333 aa).

A CN hydrolase domain is found at 9 to 284; sequence VRVAVTQAEP…EGIIYADLEM (276 aa). E49 serves as the catalytic Proton acceptor. K129 is an active-site residue. C164 functions as the Nucleophile in the catalytic mechanism.

The protein belongs to the carbon-nitrogen hydrolase superfamily. Nitrilase family.

It catalyses the reaction a nitrile + 2 H2O = a carboxylate + NH4(+). The catalysed reaction is 4-chlorophenylacetonitrile + 2 H2O = 4-chlorophenylacetate + NH4(+). Functionally, nitrilase that hydrolyzes preferentially phenylacetonitrile, (R,S)-mandelonitrile, and 3-indolylacetonitrile. This Aspergillus oryzae (strain ATCC 42149 / RIB 40) (Yellow koji mold) protein is Arylacetonitrilase.